The chain runs to 261 residues: MSALISLKALSVTFDDKKVLDSISLDLHKGKITTLIGPNGAGKSTLVKIIIGLLKPTSGQVQRQAKLTIGYVPQKLKLNDTLPLNVIRFLNLSGKYSQQETMEALRLVGAEHLYKSNMHKLSGGETQRVLLARALLQRPDLLVLDEPAQGVDIQGQIDLYDLIESIRHRFDCAVFMVSHDLHLVMAKTDEVICLQHHVCCSGAPEDITQHPSYIALFGSAARDSLAIYHHQHDHHHHDLAGQPVSGDATQCNHHHHGHHHD.

The region spanning 5 to 220 (ISLKALSVTF…PSYIALFGSA (216 aa)) is the ABC transporter domain. 37 to 44 (GPNGAGKS) lines the ATP pocket. Residues 236–261 (HHDLAGQPVSGDATQCNHHHHGHHHD) form a disordered region. A compositionally biased stretch (basic residues) spans 252–261 (NHHHHGHHHD).

Belongs to the ABC transporter superfamily. Zinc importer (TC 3.A.1.15.5) family. In terms of assembly, the complex is composed of two ATP-binding proteins (ZnuC), two transmembrane proteins (ZnuB) and a solute-binding protein (ZnuA).

The protein localises to the cell inner membrane. It carries out the reaction Zn(2+)(out) + ATP(in) + H2O(in) = Zn(2+)(in) + ADP(in) + phosphate(in) + H(+)(in). Part of the ABC transporter complex ZnuABC involved in zinc import. Responsible for energy coupling to the transport system. This Vibrio vulnificus (strain CMCP6) protein is Zinc import ATP-binding protein ZnuC.